The following is a 1180-amino-acid chain: Protocadherin-12 (1180 aa).

A signal peptide spans 1–17 (MMLLLPFLLGLLGPGSY). Over 18-716 (LFISGDCQEV…HEPGVLSTPA (699 aa)) the chain is Extracellular. 5 consecutive Cadherin domains span residues 28-135 (ATVM…QPQF), 136-244 (PKDE…SPVF), 245-352 (AESS…APSI), 355-460 (TWAS…APVF), and 461-565 (EKSR…APEV). Residues Asn-265 and Asn-415 are each glycosylated (N-linked (GlcNAc...) asparagine). Asn-582, Asn-659, and Asn-662 each carry an N-linked (GlcNAc...) asparagine glycan. The 112-residue stretch at 600-711 (PAGTGIPPKA…LRDSAHEPGV (112 aa)) folds into the Cadherin 6 domain. Residues 717–737 (LALICLAVLLAIFGLLLALFV) form a helical membrane-spanning segment. The Cytoplasmic segment spans residues 738 to 1180 (SICRTERKDN…ESRLGCGRNL (443 aa)). 2 disordered regions span residues 857 to 930 (NASR…GPHQ) and 973 to 1026 (QFQP…PEED). Residue Ser-859 is modified to Phosphoserine. Residues 904 to 918 (PASSATLRRQRNFNG) show a composition bias toward polar residues. Residues 1014–1026 (PDLEEGPPSPEED) show a composition bias toward acidic residues. Ser-1064 bears the Phosphoserine mark. Over residues 1076–1093 (SSPDATTSEEPRTFQTFG) the composition is skewed to polar residues. Disordered regions lie at residues 1076–1104 (SSPDATTSEEPRTFQTFGKTVGPGPELSP) and 1156–1180 (SGASASEAQGRKKAAESRLGCGRNL).

In terms of processing, N-glycosylated. Post-translationally, cleaved by ADAM10 close to the transmembrane domain to release the Protocadherin-12, secreted form in the serum. Cleavage results in reduced cellular adhesion in a cell migration assay. Expressed in endothelial cells: localizes in vasculogenic rather than angiogenic endothelium. Strongly expressed in a subset of invasive cells of the placenta, named glycogen-rich trophoblasts cells (at protein level). glycogen-rich trophoblasts cells originate from the from the ectoplacental cone where they rapidly form tight islets (at protein level). In adult mice, present at high level in mesangial cells of kidney glomeruli, while expression was not detected in other types of perivascular cells.

The protein resides in the cell membrane. It is found in the cell junction. Its subcellular location is the secreted. Cellular adhesion molecule that may play an important role in cell-cell interactions at interendothelial junctions. Acts as a regulator of cell migration, probably via increasing cell-cell adhesion. Promotes homotypic calcium-dependent aggregation and adhesion and clusters at intercellular junctions. Unable to bind to catenins, weakly associates with the cytoskeleton. In Mus musculus (Mouse), this protein is Protocadherin-12.